We begin with the raw amino-acid sequence, 267 residues long: GTP cyclohydrolase MptA (267 aa).

This sequence belongs to the GTP cyclohydrolase IV family. Homodimer. Fe(2+) is required as a cofactor.

The enzyme catalyses GTP + H2O = 7,8-dihydroneopterin 2',3'-cyclic phosphate + formate + diphosphate + H(+). It functions in the pathway cofactor biosynthesis; 5,6,7,8-tetrahydromethanopterin biosynthesis. Functionally, converts GTP to 7,8-dihydro-D-neopterin 2',3'-cyclic phosphate, the first intermediate in the biosynthesis of coenzyme methanopterin. This chain is GTP cyclohydrolase MptA, found in Thermococcus kodakarensis (strain ATCC BAA-918 / JCM 12380 / KOD1) (Pyrococcus kodakaraensis (strain KOD1)).